We begin with the raw amino-acid sequence, 233 residues long: Cell number regulator 8 (233 aa).

Transmembrane regions (helical) follow at residues 85–101 (VCLL…GSNV) and 115–138 (CLPY…APWF).

Belongs to the cornifelin family. As to expression, expressed in roots, coleoptiles, leaves, stalks, apical meristems, immature ears, embryos, endosperm, pericarp, silks, tassel spikelets and pollen. Highest expression in the pericarp and stalks.

The protein localises to the membrane. In Zea mays (Maize), this protein is Cell number regulator 8 (CNR8).